Consider the following 593-residue polypeptide: Mono(ADP-ribosyl)transferase SpvB (593 aa).

A disordered region spans residues 361–384 (PVNNMMPPPPPPPPPMMGGNSSRP). Pro residues predominate over residues 366-376 (MPPPPPPPPPM). The TR mART core domain maps to 375–578 (PMMGGNSSRP…LRLSDDATAD (204 aa)). Residues arginine 473, serine 503, and glutamate 540 contribute to the active site.

Belongs to the SpvB family.

It localises to the secreted. The catalysed reaction is L-arginyl-[protein] + NAD(+) = N(omega)-(ADP-D-ribosyl)-L-arginyl-[protein] + nicotinamide + H(+). Its function is as follows. Mono-ADP-ribosylates muscle and non-muscle actin. ADP-ribosylates Chinese hamster ovary and HeLa cell actin as well as rabbit muscle, porcine heart actin and non-muscle beta- and gamma-actin. ADP-ribosylation of actin prevents the polymerization of G actin to F actin, causing actin filament depolymerization, destruction of the cytoskeleton and cytotoxicity; this requires only the C-terminal 120 residues. Does not possess NAD(+)-glycohydrolase activity, unlike most mART enzymes. The sequence is that of Mono(ADP-ribosyl)transferase SpvB (spvB) from Salmonella dublin.